A 357-amino-acid polypeptide reads, in one-letter code: Carbamoyl phosphate synthase small chain (357 aa).

Residues 1–168 (MSKRLLILED…STTTAYPSPN (168 aa)) are CPSase. Positions 46, 220, and 222 each coordinate L-glutamine. Residues 172-357 (KVVVVDFGLK…FMDLMDNFKK (186 aa)) enclose the Glutamine amidotransferase type-1 domain. Cys-247 serves as the catalytic Nucleophile. Leu-248, Gln-251, Asn-289, Gly-291, and Tyr-292 together coordinate L-glutamine. Catalysis depends on residues His-331 and Asp-333.

This sequence belongs to the CarA family. As to quaternary structure, composed of two chains; the small (or glutamine) chain promotes the hydrolysis of glutamine to ammonia, which is used by the large (or ammonia) chain to synthesize carbamoyl phosphate. Tetramer of heterodimers (alpha,beta)4.

It catalyses the reaction hydrogencarbonate + L-glutamine + 2 ATP + H2O = carbamoyl phosphate + L-glutamate + 2 ADP + phosphate + 2 H(+). The enzyme catalyses L-glutamine + H2O = L-glutamate + NH4(+). It functions in the pathway amino-acid biosynthesis; L-arginine biosynthesis; carbamoyl phosphate from bicarbonate: step 1/1. It participates in pyrimidine metabolism; UMP biosynthesis via de novo pathway; (S)-dihydroorotate from bicarbonate: step 1/3. Functionally, small subunit of the glutamine-dependent carbamoyl phosphate synthetase (CPSase). CPSase catalyzes the formation of carbamoyl phosphate from the ammonia moiety of glutamine, carbonate, and phosphate donated by ATP, constituting the first step of 2 biosynthetic pathways, one leading to arginine and/or urea and the other to pyrimidine nucleotides. The small subunit (glutamine amidotransferase) binds and cleaves glutamine to supply the large subunit with the substrate ammonia. This Lactococcus lactis subsp. lactis (strain IL1403) (Streptococcus lactis) protein is Carbamoyl phosphate synthase small chain.